The primary structure comprises 126 residues: Aspartate 1-decarboxylase (126 aa).

Ser25 (schiff-base intermediate with substrate; via pyruvic acid) is an active-site residue. Residue Ser25 is modified to Pyruvic acid (Ser). Thr57 serves as a coordination point for substrate. Tyr58 functions as the Proton donor in the catalytic mechanism. 73–75 provides a ligand contact to substrate; it reads GAA.

This sequence belongs to the PanD family. In terms of assembly, heterooctamer of four alpha and four beta subunits. Pyruvate serves as cofactor. In terms of processing, is synthesized initially as an inactive proenzyme, which is activated by self-cleavage at a specific serine bond to produce a beta-subunit with a hydroxyl group at its C-terminus and an alpha-subunit with a pyruvoyl group at its N-terminus.

It localises to the cytoplasm. It catalyses the reaction L-aspartate + H(+) = beta-alanine + CO2. The protein operates within cofactor biosynthesis; (R)-pantothenate biosynthesis; beta-alanine from L-aspartate: step 1/1. In terms of biological role, catalyzes the pyruvoyl-dependent decarboxylation of aspartate to produce beta-alanine. This chain is Aspartate 1-decarboxylase, found in Pseudomonas fluorescens.